The sequence spans 475 residues: Peroxisome proliferator-activated receptor gamma (475 aa).

Serine 82 carries the phosphoserine; by MAPK modification. Positions 106-180 (AIECRVCSDK…VGMSHNAIRF (75 aa)) form a DNA-binding region, nuclear receptor. NR C4-type zinc fingers lie at residues 109–129 (CRVCSDKASGFHYGVHACEGC) and 146–168 (CDLNCRIHKKSRNKCQYCRFQKC). Residues 175–250 (HNAIRFGRMP…DKSPFVIYDM (76 aa)) are interaction with FAM120B. One can recognise an NR LBD domain in the interval 208–473 (DLRALAKHLY…HPLLQEIYKD (266 aa)). Lysine 222 is covalently cross-linked (Glycyl lysine isopeptide (Lys-Gly) (interchain with G-Cter in ubiquitin)). Positions 465–473 (PLLQEIYKD) match the 9aaTAD motif.

It belongs to the nuclear hormone receptor family. NR1 subfamily. Interacts with FOXO1 (acetylated form). Heterodimer with other nuclear receptors, such as RXRA. The heterodimer with the retinoic acid receptor RXRA is called adipocyte-specific transcription factor ARF6. Interacts with NCOA6 coactivator, leading to a strong increase in transcription of target genes. Interacts with coactivator PPARBP, leading to a mild increase in transcription of target genes. Interacts with NOCA7 in a ligand-inducible manner. Interacts with NCOA1 and NCOA2 LXXLL motifs. Interacts with ASXL1, ASXL2, DNTTIP2, FAM120B, MAP2K1/MEK1, NR0B2, PDPK1, PRDM16, PRMT2 and TGFB1I1. Interacts (when activated by agonist) with PPP5C. Interacts with HELZ2 and THRAP3; the interaction stimulates the transcriptional activity of PPARG. Interacts with PER2, the interaction is ligand dependent and blocks PPARG recruitment to target promoters. Interacts with NOCT. Interacts with ACTN4. Interacts (when in the liganded conformation) with GPS2. Interacts with CRY1 and CRY2 in a ligand-dependent manner. In the absence of hormonal ligand, interacts with TACC1. In macrophages, interacts with PAQR3 and STUB1; the interactions promote PPARG poylubiquitination and STUB1-mediated degradation. Phosphorylated at basal conditions and dephosphorylated when treated with the ligand. May be dephosphorylated by PPP5C. The phosphorylated form may be inactive and dephosphorylation induces adipogenic activity. In terms of processing, ubiquitinated by E3 ubiquitin-protein ligase complex containing FBXO9; leading to proteasomal degradation. Ubiquitinated at Lys-222 by TRIM55 leading to proteasomal degradation. Ubiquitinated by E3 ubiquitin-protein ligase STUB1/CHIP; leading to proteasomal degradation.

It is found in the nucleus. Its subcellular location is the cytoplasm. Its activity is regulated as follows. PDPK1 activates its transcriptional activity independently of its kinase activity. In terms of biological role, nuclear receptor that binds peroxisome proliferators such as hypolipidemic drugs and fatty acids. Once activated by a ligand, the nuclear receptor binds to DNA specific PPAR response elements (PPRE) and modulates the transcription of its target genes, such as acyl-CoA oxidase. It therefore controls the peroxisomal beta-oxidation pathway of fatty acids. Key regulator of adipocyte differentiation and glucose homeostasis. ARF6 acts as a key regulator of the tissue-specific adipocyte P2 (aP2) enhancer. Acts as a critical regulator of gut homeostasis by suppressing NF-kappa-B-mediated pro-inflammatory responses. Plays a role in the regulation of cardiovascular circadian rhythms by regulating the transcription of BMAL1 in the blood vessels. In Oryctolagus cuniculus (Rabbit), this protein is Peroxisome proliferator-activated receptor gamma (PPARG).